The following is a 149-amino-acid chain: Calmodulin, striated muscle (149 aa).

EF-hand domains are found at residues 8-43 (EQIA…LGQN), 44-79 (PTEA…KMRD), 81-116 (DSEE…LGEK), and 117-149 (LTDE…MTEK). Ca(2+) is bound by residues aspartate 21, aspartate 23, aspartate 25, cysteine 27, glutamate 32, aspartate 57, aspartate 59, serine 61, threonine 63, glutamate 68, aspartate 94, aspartate 96, asparagine 98, tyrosine 100, and glutamate 105. Lysine 116 is modified (N6,N6,N6-trimethyllysine). 5 residues coordinate Ca(2+): aspartate 130, asparagine 132, aspartate 134, glutamine 136, and glutamate 141.

The protein belongs to the calmodulin family.

This Gallus gallus (Chicken) protein is Calmodulin, striated muscle (CCM1).